The sequence spans 372 residues: GPN-loop GTPase 1 (372 aa).

Ala2 carries the post-translational modification N-acetylalanine. 29-34 (GSGKTT) contacts GTP. The Gly-Pro-Asn (GPN)-loop; involved in dimer interface signature appears at 86-88 (GPN). 189-192 (NKTD) is a GTP binding site. Ser301 and Ser314 each carry phosphoserine. A disordered region spans residues 303 to 372 (ALDPEAGKGN…ESMAHWKRNK (70 aa)). Thr328 is modified (phosphothreonine). Residues 330 to 342 (DEEDEEADSDTDD) show a composition bias toward acidic residues. Ser338 bears the Phosphoserine mark. Phosphothreonine is present on Thr340. The segment covering 343 to 355 (IDHRVTEESREEP) has biased composition (basic and acidic residues).

It belongs to the GPN-loop GTPase family. As to quaternary structure, heterodimer with GPN3. Binds to RNA polymerase II (RNAPII). Interacts directly with RNAPII subunits RPB4 and RPB7 and the CTD of RPB1. Interacts with XPA.

The protein localises to the cytoplasm. It is found in the nucleus. Small GTPase required for proper nuclear import of RNA polymerase II (RNAPII). May act at an RNAP assembly step prior to nuclear import. Forms an interface between the RNA polymerase II enzyme and chaperone/scaffolding proteins, suggesting that it is required to connect RNA polymerase II to regulators of protein complex formation. May be involved in nuclear localization of XPA. The sequence is that of GPN-loop GTPase 1 from Mus musculus (Mouse).